Consider the following 264-residue polypeptide: DNA-binding HTH-type transcriptional repressor TrmBL2 (264 aa).

Residues 81-113 (LEKFIEEWQERVKEELEAKKKAKEELIELMKPL) are a coiled coil.

Belongs to the transcriptional regulator TrmB family.

Its subcellular location is the cytoplasm. The protein localises to the chromosome. An abundant chromosomal protein that seems to be involved in both genome architecture and transcription repression. Incubation with DNA in vitro gives fibrous structures 14.2 +/- 2.1 nm in thickness (naked DNA is 1.83 +/- 0.37 nm); does not significantly compact DNA. Binds to both coding and non-coding regions; binding within gene promoters correlates with decreased transcript levels, while binding within coding regions does not. The protein is DNA-binding HTH-type transcriptional repressor TrmBL2 of Thermococcus kodakarensis (strain ATCC BAA-918 / JCM 12380 / KOD1) (Pyrococcus kodakaraensis (strain KOD1)).